We begin with the raw amino-acid sequence, 44 residues long: Cytochrome b559 subunit beta (44 aa).

Residues 19–35 (WLAVHTLAVPTVFFVGA) form a helical membrane-spanning segment. Histidine 23 serves as a coordination point for heme.

Belongs to the PsbE/PsbF family. Heterodimer of an alpha subunit and a beta subunit. PSII is composed of 1 copy each of membrane proteins PsbA, PsbB, PsbC, PsbD, PsbE, PsbF, PsbH, PsbI, PsbJ, PsbK, PsbL, PsbM, PsbT, PsbX, PsbY, PsbZ, Psb30/Ycf12, peripheral proteins PsbO, CyanoQ (PsbQ), PsbU, PsbV and a large number of cofactors. It forms dimeric complexes. Heme b is required as a cofactor.

It is found in the cellular thylakoid membrane. This b-type cytochrome is tightly associated with the reaction center of photosystem II (PSII). PSII is a light-driven water:plastoquinone oxidoreductase that uses light energy to abstract electrons from H(2)O, generating O(2) and a proton gradient subsequently used for ATP formation. It consists of a core antenna complex that captures photons, and an electron transfer chain that converts photonic excitation into a charge separation. This chain is Cytochrome b559 subunit beta, found in Crocosphaera subtropica (strain ATCC 51142 / BH68) (Cyanothece sp. (strain ATCC 51142)).